A 764-amino-acid polypeptide reads, in one-letter code: Molybdenum cofactor sulfurase 3 (764 aa).

K228 carries the N6-(pyridoxal phosphate)lysine modification. C394 is a catalytic residue. The MOSC domain occupies 607 to 762 (LRLLKQSDEE…LYCNSVVEGL (156 aa)).

Belongs to the class-V pyridoxal-phosphate-dependent aminotransferase family. MOCOS subfamily. It depends on pyridoxal 5'-phosphate as a cofactor.

It catalyses the reaction Mo-molybdopterin + L-cysteine + AH2 = thio-Mo-molybdopterin + L-alanine + A + H2O. Sulfurates the molybdenum cofactor. Sulfation of molybdenum is essential for xanthine dehydrogenase (XDH) and aldehyde oxidase (ADO) enzymes in which molybdenum cofactor is liganded by 1 oxygen and 1 sulfur atom in active form. The sequence is that of Molybdenum cofactor sulfurase 3 from Aedes aegypti (Yellowfever mosquito).